Consider the following 61-residue polypeptide: Large ribosomal subunit protein uL30 (61 aa).

Belongs to the universal ribosomal protein uL30 family. Part of the 50S ribosomal subunit.

This is Large ribosomal subunit protein uL30 from Corynebacterium glutamicum (strain R).